A 254-amino-acid chain; its full sequence is Allene oxide cyclase 4, chloroplastic (254 aa).

The transit peptide at 1-52 (MIMASSAAASISMITLRNLSRNHQSHQSTFLGFSRSFHNQRISSNSPGLSTR) directs the protein to the chloroplast.

The protein belongs to the allene oxide cyclase family. As to expression, highly expressed in fully developed leaves.

It localises to the plastid. The protein localises to the chloroplast. The enzyme catalyses (9Z,13S,15Z)-12,13-epoxyoctadeca-9,11,15-trienoate = (9S,13S,15Z)-12-oxophyto-10,15-dienoate. Involved in the production of 12-oxo-phytodienoic acid (OPDA), a precursor of jasmonic acid. This chain is Allene oxide cyclase 4, chloroplastic (AOC4), found in Arabidopsis thaliana (Mouse-ear cress).